The following is a 292-amino-acid chain: RNA polymerase II transcriptional coactivator SUB1 (292 aa).

Disordered stretches follow at residues 1-31 and 117-292; these read MSYY…GGMP and LLSD…SEEE. Residues 20 to 31 are compositionally biased toward low complexity; sequence LSNSNNNNGGMP. Ser119 carries the post-translational modification Phosphoserine. Composition is skewed to basic and acidic residues over residues 133 to 166, 179 to 191, 204 to 240, and 251 to 267; these read NNDK…LEPR, PHEE…EREA, KQQE…KIAE, and AKKE…KDAN. 3 positions are modified to phosphoserine: Ser268, Ser269, and Ser289.

This sequence belongs to the transcriptional coactivator PC4 family.

The protein resides in the nucleus. In terms of biological role, plays a role in the release of TFIIB from the transcription complex during transcription initiation. Binds to TFIIB and specifically inhibits the formation of the TBP-TFIIB-promoter complexes. This chain is RNA polymerase II transcriptional coactivator SUB1 (SUB1), found in Saccharomyces cerevisiae (strain ATCC 204508 / S288c) (Baker's yeast).